The sequence spans 57 residues: Large ribosomal subunit protein bL32 (57 aa).

Residues 1–19 (MATPKFKKSRANTHSRRSQ) show a composition bias toward basic residues. The segment at 1 to 20 (MATPKFKKSRANTHSRRSQW) is disordered.

This sequence belongs to the bacterial ribosomal protein bL32 family.

This chain is Large ribosomal subunit protein bL32, found in Corynebacterium aurimucosum (strain ATCC 700975 / DSM 44827 / CIP 107346 / CN-1) (Corynebacterium nigricans).